Reading from the N-terminus, the 332-residue chain is Glyceraldehyde-3-phosphate dehydrogenase 2 (332 aa).

Residues Arg11, Ile12, and Asp33 each contribute to the NAD(+) site. Residues Lys46 and Lys63 each participate in a glycyl lysine isopeptide (Lys-Gly) (interchain with G-Cter in ubiquitin) cross-link. Position 120 (Thr120) interacts with NAD(+). D-glyceraldehyde 3-phosphate is bound by residues 149–151 (SCT), Thr180, 209–210 (TG), and Arg232. The Nucleophile role is filled by Cys150. Ser302 is subject to Phosphoserine. Asn314 and Tyr318 together coordinate NAD(+).

It belongs to the glyceraldehyde-3-phosphate dehydrogenase family. Homotetramer.

Its subcellular location is the cytoplasm. The enzyme catalyses D-glyceraldehyde 3-phosphate + phosphate + NAD(+) = (2R)-3-phospho-glyceroyl phosphate + NADH + H(+). It carries out the reaction NADH + H2O = (6R)-NADHX. The catalysed reaction is NADH + H2O = (6S)-NADHX. It catalyses the reaction NADPH + H2O = (6R)-NADPHX. The enzyme catalyses NADPH + H2O = (6S)-NADPHX. It participates in carbohydrate degradation; glycolysis; pyruvate from D-glyceraldehyde 3-phosphate: step 1/5. Its function is as follows. Glyceraldehyde-3-phosphate dehydrogenase (GAPDH) involved in glycolysis and gluconeogenesis. Catalyzes the reaction of glyceraldehyde-3-phosphate to 1,3 bis-phosphoglycerate. The contribution of the TDH1, TDH2, and TDH3 to the total glyceraldehyde-3-phosphate dehydrogenase activity is 10-15, 25-30, and 50-60%, respectively. In terms of biological role, as a side activity, catalyzes the hydration of the nicotinamide ring of NADH or NADPH at the C6 position to give the corresponding hydrates, NADHX and NADPHX, which exist as R and S epimers, that cannot act as electron donors or acceptors and inhibit several dehydrogenases, making them toxic. The protein is Glyceraldehyde-3-phosphate dehydrogenase 2 of Saccharomyces cerevisiae (strain ATCC 204508 / S288c) (Baker's yeast).